A 222-amino-acid chain; its full sequence is MKFFIFILALQQLYVQSFAQDFDFFYFVLQWPGAYCDSRHSCCYPQTGKPAADFGIHGLWPNYKTGGWPQNCNPDSRFDDLRVSDLMSDLQREWPTLSCPSNDGMKFWTHEWEKHGTCAESELDQHDYFEAGLKLKQKANLLHALTNAGIKPDDKFYEMKDIENTIKQVVGFAPGIECNKDSSHNSQLYQIYLCVDTSASKFINCPVMPHGRCDSRVQFPKF.

The N-terminal stretch at 1-19 (MKFFIFILALQQLYVQSFA) is a signal peptide. RNA is bound at residue Gln30. Cysteines 36 and 42 form a disulfide. Residues His57, Phe107, 110–111 (HE), and 114–115 (KH) each bind RNA. His57 acts as the Proton donor in catalysis. 3 disulfides stabilise this stretch: Cys72–Cys118, Cys178–Cys213, and Cys194–Cys205. Glu111 is a catalytic residue. Catalysis depends on His115, which acts as the Proton acceptor.

It belongs to the RNase T2 family.

The enzyme catalyses a ribonucleotidyl-ribonucleotide-RNA + H2O = a 3'-end 3'-phospho-ribonucleotide-RNA + a 5'-end dephospho-ribonucleoside-RNA + H(+). Functionally, may remobilize phosphate, particularly when cells senesce or when phosphate becomes limiting. The chain is Ribonuclease 3 (RNS3) from Arabidopsis thaliana (Mouse-ear cress).